The primary structure comprises 1099 residues: Adenylate-forming reductase Nps11 (1099 aa).

The interval 29 to 360 is adenylation (A) domain; it reads AEHNSNVPFF…GTECGGLNSM (332 aa). Residues histidine 244, 347–348, threonine 352, and 432–435 contribute to the AMP site; these read NV and LVGR. Positions 578-664 constitute a Carrier domain; it reads WSEESLVVWL…RLSQALARVV (87 aa). The residue at position 613 (serine 613) is an O-(pantetheine 4'-phosphoryl)serine. Residues 717-952 are reductase (R) domain; sequence LTGSTGGLGS…VVSWLPPHAV (236 aa). NADP(+)-binding positions include 721 to 724, 809 to 811, tyrosine 883, and lysine 887; these read TGGL and NAW.

The protein belongs to the adenylate-forming reductase family.

In terms of biological role, adenylate-forming reductase, a natural product biosynthesis enzyme that resembles non-ribosomal peptide synthetases, yet serves to modify one substrate, rather than to condense two or more building blocks. The A-domain preferentially accepts benzoic acid as substrate. The natural product of the enzyme is not yet known. The chain is Adenylate-forming reductase Nps11 from Serpula lacrymans var. lacrymans (strain S7.9) (Dry rot fungus).